A 568-amino-acid chain; its full sequence is Proline--tRNA ligase (568 aa).

This sequence belongs to the class-II aminoacyl-tRNA synthetase family. ProS type 1 subfamily. As to quaternary structure, homodimer.

Its subcellular location is the cytoplasm. The enzyme catalyses tRNA(Pro) + L-proline + ATP = L-prolyl-tRNA(Pro) + AMP + diphosphate. Functionally, catalyzes the attachment of proline to tRNA(Pro) in a two-step reaction: proline is first activated by ATP to form Pro-AMP and then transferred to the acceptor end of tRNA(Pro). As ProRS can inadvertently accommodate and process non-cognate amino acids such as alanine and cysteine, to avoid such errors it has two additional distinct editing activities against alanine. One activity is designated as 'pretransfer' editing and involves the tRNA(Pro)-independent hydrolysis of activated Ala-AMP. The other activity is designated 'posttransfer' editing and involves deacylation of mischarged Ala-tRNA(Pro). The misacylated Cys-tRNA(Pro) is not edited by ProRS. The protein is Proline--tRNA ligase of Macrococcus caseolyticus (strain JCSC5402) (Macrococcoides caseolyticum).